We begin with the raw amino-acid sequence, 106 residues long: Iron-sulfur cluster assembly protein CyaY (106 aa).

This sequence belongs to the frataxin family.

Involved in iron-sulfur (Fe-S) cluster assembly. May act as a regulator of Fe-S biogenesis. The chain is Iron-sulfur cluster assembly protein CyaY from Escherichia coli O9:H4 (strain HS).